The sequence spans 160 residues: SsrA-binding protein (160 aa).

Belongs to the SmpB family.

The protein localises to the cytoplasm. In terms of biological role, required for rescue of stalled ribosomes mediated by trans-translation. Binds to transfer-messenger RNA (tmRNA), required for stable association of tmRNA with ribosomes. tmRNA and SmpB together mimic tRNA shape, replacing the anticodon stem-loop with SmpB. tmRNA is encoded by the ssrA gene; the 2 termini fold to resemble tRNA(Ala) and it encodes a 'tag peptide', a short internal open reading frame. During trans-translation Ala-aminoacylated tmRNA acts like a tRNA, entering the A-site of stalled ribosomes, displacing the stalled mRNA. The ribosome then switches to translate the ORF on the tmRNA; the nascent peptide is terminated with the 'tag peptide' encoded by the tmRNA and targeted for degradation. The ribosome is freed to recommence translation, which seems to be the essential function of trans-translation. The polypeptide is SsrA-binding protein (Chloroflexus aurantiacus (strain ATCC 29364 / DSM 637 / Y-400-fl)).